Consider the following 714-residue polypeptide: ABC transporter B family member 28 (714 aa).

5 helical membrane-spanning segments follow: residues 109–129 (LSVC…MPVF), 161–181 (IFTI…MAIL), 240–260 (ICIL…LMLA), 340–360 (VAVY…VKTG), and 361–381 (ELAV…TFAV). Positions 109 to 393 (LSVCLLTLLG…LVNTFGDLRG (285 aa)) constitute an ABC transmembrane type-1 domain. Positions 470–708 (VCLDDVHFAY…KGSYASLVGT (239 aa)) constitute an ABC transporter domain. 505 to 512 (GSSGAGKS) provides a ligand contact to ATP.

The protein belongs to the ABC transporter superfamily. ABCB family. Multidrug resistance exporter (TC 3.A.1.201) subfamily.

The protein resides in the membrane. The protein is ABC transporter B family member 28 (ABCB28) of Arabidopsis thaliana (Mouse-ear cress).